Consider the following 322-residue polypeptide: Sideroflexin-2 (322 aa).

Residue M1 is modified to N-acetylmethionine. 5 consecutive transmembrane segments (helical) span residues 100–122, 142–164, 174–192, 228–250, and 265–287; these read MIIT…WQWV, SVRQ…AVGM, LVGR…CVNI, VVIS…MERL, and PLQV…GLFP.

The protein belongs to the sideroflexin family.

The protein resides in the mitochondrion inner membrane. It localises to the mitochondrion outer membrane. The catalysed reaction is L-serine(in) = L-serine(out). Its function is as follows. Mitochondrial amino-acid transporter that mediates transport of serine into mitochondria. Involved in mitochondrial iron homeostasis by regulating heme biosynthesis. In Bos taurus (Bovine), this protein is Sideroflexin-2.